The primary structure comprises 358 residues: Chorismate synthase (358 aa).

NADP(+) is bound at residue Arg48. FMN-binding positions include 125-127 (RAS), Ser277, 292-296 (KPIPS), and Arg318.

The protein belongs to the chorismate synthase family. As to quaternary structure, homotetramer. It depends on FMNH2 as a cofactor.

It catalyses the reaction 5-O-(1-carboxyvinyl)-3-phosphoshikimate = chorismate + phosphate. The protein operates within metabolic intermediate biosynthesis; chorismate biosynthesis; chorismate from D-erythrose 4-phosphate and phosphoenolpyruvate: step 7/7. Functionally, catalyzes the anti-1,4-elimination of the C-3 phosphate and the C-6 proR hydrogen from 5-enolpyruvylshikimate-3-phosphate (EPSP) to yield chorismate, which is the branch point compound that serves as the starting substrate for the three terminal pathways of aromatic amino acid biosynthesis. This reaction introduces a second double bond into the aromatic ring system. The chain is Chorismate synthase from Desulfatibacillum aliphaticivorans.